We begin with the raw amino-acid sequence, 211 residues long: ATP phosphoribosyltransferase (211 aa).

The protein belongs to the ATP phosphoribosyltransferase family. Short subfamily. Heteromultimer composed of HisG and HisZ subunits.

The protein resides in the cytoplasm. It catalyses the reaction 1-(5-phospho-beta-D-ribosyl)-ATP + diphosphate = 5-phospho-alpha-D-ribose 1-diphosphate + ATP. It functions in the pathway amino-acid biosynthesis; L-histidine biosynthesis; L-histidine from 5-phospho-alpha-D-ribose 1-diphosphate: step 1/9. Functionally, catalyzes the condensation of ATP and 5-phosphoribose 1-diphosphate to form N'-(5'-phosphoribosyl)-ATP (PR-ATP). Has a crucial role in the pathway because the rate of histidine biosynthesis seems to be controlled primarily by regulation of HisG enzymatic activity. The chain is ATP phosphoribosyltransferase from Bacillus cereus (strain ATCC 10987 / NRS 248).